Here is an 85-residue protein sequence, read N- to C-terminus: Antibacterial factor-related peptide 2 (85 aa).

The signal sequence occupies residues 1–17 (MFVRSLFLALLLATIVA). Residues 82–85 (IKRG) constitute a propeptide that is removed on maturation.

In terms of tissue distribution, expressed in the pharynx (at protein level). Detected in pharyngeal neurons and secretory cells.

Its subcellular location is the secreted. Its function is as follows. Exhibits antimicrobial activity against the Gram-positive bacteria B.subtilis IFO 3134, K.varians MAFF 118076 and S.aureus ATCC 6538P, the Gram-negative bacteria A.tumefaciens MAFF 1001, B.bacteriovorus MAFF 106101 and K.pneumoniae MAFF 519002, and the yeasts C.krusei MAFF 114085, K.thermotolerans MAFF 113848 and T.delbrueckii MAFF 113811. This is Antibacterial factor-related peptide 2 from Caenorhabditis elegans.